Here is a 298-residue protein sequence, read N- to C-terminus: Cell wall protein DAN1 (298 aa).

The signal sequence occupies residues 1-19 (MSRISILAVAAALVASATA). Residues 122 to 168 (PASTTEASSTSTSEASSAATESSSSSESSAETSSNAASTQATVSSES) form a disordered region. Asparagine 275 is lipidated: GPI-anchor amidated asparagine. A propeptide spans 276–298 (GANKFNNGVFGAAAIAGAAALLL) (removed in mature form).

Belongs to the SRP1/TIP1 family. Post-translationally, extensively O-glycosylated. In terms of processing, the GPI-anchor is attached to the protein in the endoplasmic reticulum and serves to target the protein to the cell surface. There, the glucosamine-inositol phospholipid moiety is cleaved off and the GPI-modified mannoprotein is covalently attached via its lipidless GPI glycan remnant to the 1,6-beta-glucan of the outer cell wall layer.

The protein resides in the secreted. The protein localises to the cell wall. Its subcellular location is the membrane. In terms of biological role, component of the cell wall. The chain is Cell wall protein DAN1 (DAN1) from Saccharomyces cerevisiae (strain ATCC 204508 / S288c) (Baker's yeast).